Here is a 612-residue protein sequence, read N- to C-terminus: Zinc metalloproteinase-disintegrin-like 8 (612 aa).

Positions 1–20 (MIQVLLVTICLAVFPYQGSS) are cleaved as a signal peptide. A propeptide spanning residues 21-189 (IILGSGNVND…KKASQLNLTP (169 aa)) is cleaved from the precursor. The 197-residue stretch at 199 to 395 (KYIELVIVAD…NRPPCILNKP (197 aa)) folds into the Peptidase M12B domain. Glutamate 202 contacts Ca(2+). Asparagine 218 is a glycosylation site (N-linked (GlcNAc...) asparagine). Aspartate 286 contributes to the Ca(2+) binding site. 3 cysteine pairs are disulfide-bonded: cysteine 310-cysteine 390, cysteine 350-cysteine 374, and cysteine 352-cysteine 357. Histidine 335 lines the Zn(2+) pocket. Glutamate 336 is an active-site residue. 2 residues coordinate Zn(2+): histidine 339 and histidine 345. Ca(2+)-binding residues include cysteine 390, asparagine 393, valine 405, asparagine 408, phenylalanine 410, glutamate 412, glutamate 415, and aspartate 418. A Disintegrin domain is found at 403–489 (PPVCGNYFVE…DCPTDDFQRN (87 aa)). 14 cysteine pairs are disulfide-bonded: cysteine 406–cysteine 435, cysteine 417–cysteine 430, cysteine 419–cysteine 425, cysteine 429–cysteine 452, cysteine 443–cysteine 449, cysteine 448–cysteine 474, cysteine 461–cysteine 481, cysteine 468–cysteine 500, cysteine 493–cysteine 505, cysteine 512–cysteine 562, cysteine 527–cysteine 573, cysteine 540–cysteine 550, cysteine 557–cysteine 599, and cysteine 593–cysteine 605. Residues 467 to 469 (ECD) carry the D/ECD-tripeptide motif. Asparagine 502 carries N-linked (GlcNAc...) asparagine glycosylation.

It belongs to the venom metalloproteinase (M12B) family. P-III subfamily. Requires Zn(2+) as cofactor. In terms of tissue distribution, expressed by the venom gland.

It localises to the secreted. In terms of biological role, snake venom metalloproteinase that impairs hemostasis in the envenomed animal. The chain is Zinc metalloproteinase-disintegrin-like 8 from Crotalus adamanteus (Eastern diamondback rattlesnake).